Here is a 1110-residue protein sequence, read N- to C-terminus: MALKETDAKIHVERGDHPEIYDEAYYDRSVDHKNEILDTLAEMLQNATGKTLRPTRDTQTVLANNEVPQSSSGLSSTPTTISIMDLPNPCLNASSLTCSIKGVSTFNVYYQVESNGVIYSCISDTITKLGNCEGSSELPRSFETVPVVPITKIDNKRKLSIGTKFYIIESLENYNYPIMYNSRPTNGTVSLQSVKFSGDCKISKTNIVNSYTVSLTTPEKIMGYVVKREGSDMSHSIISFSGSVSLTFTEENMDGKHNLLCGDKSSKVPLVDKRVRDCIIKYSKNIYKQTACINFSWFRLIMIALIVYFPIRYLVNKTSKTLFYGYDLLGLITYPILLLINYLWSYFPLKCKVCGNLCLVTHECSKLCICNKNKASEEHSEECPIITRTAEKNKKYNWASIEWFHLIVNTKIGLSFLKAVTETLIGFLILSQMPMSMAQTAQCLDSCYYVPGCDRFVTNRYDKCPEKDQCFCAIKENSIVESNFLTNVVTEGPMDCIPYQECKGRITENALVTFVKCRFGCEYASIFQSKPLDNGFLEYSGDTLGLNAVNLHFMKRLRNGIIDFYNKTEKYGYISGDALKSNESDIPESIFPRKSLIFDSVIDGKYRYMIEESLLSGGGTVFSLNDKSSSTAQKFVVYIKKVRIQYDVSEQYTTAPIQSTHTDFFSTCTGKCSDCRKEQPITGYQDFCITPTSYWGCEEVWCLAINEGATCGFCRNVYDMDQSFRIYSVIKSTIKSEVCISGFVGAKCFTVSEEVPSESGYFQADILADFHNDGLTIGQLIAHGPDSHVYAGNIARLNNPSKMFGHPQLSHQGDPIFSKKTLDTNDLSWDCSAIGKKTITIKSCGYDTYRFKTGLNQISDIPVQFTDQNSFYMEKIFSLGKLKIVLDLPSELFKTVPKKPILSSVSLSCKGCFLCSQGLRCAASFISDITFSARLTMKQCSLSTYQIAVKKGANKYNLTMFCTSNPEKQKMIIEPEGDKSYSVEALVDSVAVLEPENIIDQNDQHAHEEQQYNSDTSVWSFWDYVKSPFNFIASHFGSFFDTVRVVLLILFVFALAYLCSIVATMCRGYVRNKSYKTKYIEDTNDYSLVSTSSGKDTITRRRPPLDFSGI.

Residues 1–8 (MALKETDA) constitute a propeptide that is removed on maturation. The Lumenal segment spans residues 1–290 (MALKETDAKI…KYSKNIYKQT (290 aa)). The short motif at 14 to 16 (RGD) is the Cell attachment site element. N-linked (GlcNAc...) asparagine; by host glycans are attached at residues asparagine 46 and asparagine 92. Intrachain disulfides connect cysteine 90/cysteine 121 and cysteine 98/cysteine 132. A non-covalent dimerization region spans residues 153–171 (IDNKRKLSIGTKFYIIESL). N-linked (GlcNAc...) asparagine; by host glycosylation occurs at asparagine 186. A disulfide bridge links cysteine 200 with cysteine 261. A helical membrane pass occupies residues 291–342 (ACINFSWFRLIMIALIVYFPIRYLVNKTSKTLFYGYDLLGLITYPILLLINY). Residues 343-459 (LWSYFPLKCK…VPGCDRFVTN (117 aa)) are Cytoplasmic-facing. The Lumenal portion of the chain corresponds to 460–1044 (RYDKCPEKDQ…HFGSFFDTVR (585 aa)). N-linked (GlcNAc...) asparagine; by host glycans are attached at residues asparagine 566, asparagine 582, and asparagine 957. Residues 1045-1065 (VVLLILFVFALAYLCSIVATM) form a helical membrane-spanning segment. Over 1066–1110 (CRGYVRNKSYKTKYIEDTNDYSLVSTSSGKDTITRRRPPLDFSGI) the chain is Cytoplasmic. A disordered region spans residues 1091–1110 (TSSGKDTITRRRPPLDFSGI).

It belongs to the tospovirus envelope glycoprotein family. As to quaternary structure, homodimer; disulfide-linked. Heterodimer with Glycoprotein C. Interacts with nucleoprotein. In terms of assembly, heterodimer with Glycoprotein N. Interacts with nucleoprotein. Post-translationally, specific enzymatic cleavages in vivo yield mature proteins including Glycoprotein N and Glycoprotein C. In terms of processing, glycosylated with O-linked glycans. Glycosylation is essential for proper subcellular location. Cleaved at acidic pH.

Its subcellular location is the virion membrane. It is found in the host Golgi apparatus membrane. The protein localises to the host endoplasmic reticulum membrane. Functionally, forms the spikes present at the surface of the virion together with Glycoprotein C. They are able to attach the virion to a cell receptor and to promote fusion of membranes after endocytosis of the virion. Plays a role in virus binding and/or entry into the vector midgut. Its function is as follows. Forms the spikes present at the surface of the virion together with Glycoprotein N. They are able to attach the virion to a cell receptor and to promote fusion of membranes after endocytosis of the virion. Probable class II fusion protein. The chain is Envelopment polyprotein (GP) from Impatiens necrotic spot virus (INSV).